The following is a 601-amino-acid chain: ATP-dependent lipid A-core flippase (601 aa).

5 consecutive transmembrane segments (helical) span residues 33-53 (CVAVVAMIAYAAITPFFAKLI), 72-92 (VSLMLIGLSVLRGIAGFLSEY), 158-178 (VIGLMALMVYQNPVLSLVFLV), 255-275 (LGGGVIHLISVAGVAGILYVV), and 283-303 (TITPGSLMAFIAAMAMMLSPI). The ABC transmembrane type-1 domain occupies 34–315 (VAVVAMIAYA…LSQVVSVMQR (282 aa)). Residues 347–583 (IEYRHVSLVY…RGGYADLYAM (237 aa)) enclose the ABC transporter domain. 381 to 388 (GQSGSGKT) contributes to the ATP binding site.

Belongs to the ABC transporter superfamily. Lipid exporter (TC 3.A.1.106) family. As to quaternary structure, homodimer.

The protein resides in the cell inner membrane. It carries out the reaction ATP + H2O + lipid A-core oligosaccharideSide 1 = ADP + phosphate + lipid A-core oligosaccharideSide 2.. In terms of biological role, involved in lipopolysaccharide (LPS) biosynthesis. Translocates lipid A-core from the inner to the outer leaflet of the inner membrane. Transmembrane domains (TMD) form a pore in the inner membrane and the ATP-binding domain (NBD) is responsible for energy generation. The sequence is that of ATP-dependent lipid A-core flippase from Methylococcus capsulatus (strain ATCC 33009 / NCIMB 11132 / Bath).